The chain runs to 919 residues: Synphilin-1 (919 aa).

Disordered regions lie at residues 80–99, 108–140, and 287–313; these read SPLKHQPETLENNESDDQKN, GGESDLGPQPQELGPGDGVGGPPGKSSEPSTSL, and SSAAESKPEEQVSGLNRTSSQGPEERS. Positions 299–308 are enriched in polar residues; sequence SGLNRTSSQG. ANK repeat units lie at residues 349 to 380, 384 to 413, 419 to 448, and 456 to 485; these read NGNNLLHIAASQGHAECLQHLTSLMGEDCLNE, EKLTPAGLAIKNGQLECVRWMVSETEAIAE, DFPSLIHYAGCYGQEKILLWLLQFMQEQGI, and DGNSAVHVASQHGYLGCIQTLVEYGANVTM. Positions 515 to 552 form a coiled coil; sequence CMSLASQVVKLTKQLKEQTVERVTLQNQLQQFLEAQKS. 3 disordered regions span residues 549 to 615, 666 to 713, and 728 to 919; these read AQKS…KDED, RLRQ…SMDS, and SGGR…NKAA. The segment covering 555 to 571 has biased composition (low complexity); the sequence is KSLPSSPSSPSSPASRK. One copy of the ANK 5 repeat lies at 603 to 632; it reads ASSRARPKAKDEDSDKILRQLLGKEISENV. Residues 667 to 685 show a composition bias toward low complexity; it reads LRQLMQRSLSESDTDSNNS. Positions 686–700 are enriched in basic and acidic residues; that stretch reads EDPKTTPVRKADRPR. The stretch at 699–729 is one ANK 6 repeat; that stretch reads PRPQPIVESVESMDSAESLHLMIKKHTLASG. The segment covering 774-785 has biased composition (low complexity); sequence PSGDPQQPSPDS. Residues 833-842 show a composition bias toward basic and acidic residues; it reads NGEKDKDKGR. Over residues 844-854 the composition is skewed to polar residues; it reads LQRTSTSNESG. A compositionally biased stretch (low complexity) spans 874–886; the sequence is NQNNNNNYQAANQ.

In terms of assembly, homodimer. Heterodimer of isoform 1 and isoform 2. Interacts with SIAH1, SIAH2, SNCA, RNF19A and PRKN. Isoform 2 has a strong tendency to form aggregates and can sequester isoform 1. Post-translationally, ubiquitinated; mediated by SIAH1, SIAH2 or RNF19A and leading to its subsequent proteasomal degradation. In the absence of proteasomal degradation, ubiquitinated SNCAIP accumulates in cytoplasmic inclusion bodies. Isoform 2 is subject to limited ubiquitination that does not lead to proteasomal degradation. Detected in brain (at protein level). Widely expressed, with highest levels in brain, heart and placenta.

It localises to the cytoplasm. Its function is as follows. Isoform 2 inhibits the ubiquitin ligase activity of SIAH1 and inhibits proteasomal degradation of target proteins. Isoform 2 inhibits autoubiquitination and proteasomal degradation of SIAH1, and thereby increases cellular levels of SIAH. Isoform 2 modulates SNCA monoubiquitination by SIAH1. This is Synphilin-1 (SNCAIP) from Homo sapiens (Human).